A 238-amino-acid polypeptide reads, in one-letter code: Complement C1q-like protein 4 (238 aa).

A signal peptide spans Met1–Ser15. The tract at residues Ser37–Pro102 is disordered. A Collagen-like domain is found at Pro53–Gly96. A compositionally biased stretch (pro residues) spans Pro71–Gly96. Positions Gly105–Asp238 constitute a C1q domain.

In terms of assembly, forms homooligomers, predominantly dimers or trimers. Forms heterooligomers with C1QL1, C1QL2 and C1QL3, when proteins are coexpressed; this interaction does not occur after secretion. Interacts with ADGRB3. As to expression, highly expressed in testis and adipose tissue, brown adipose tissue expressing higher levels than subcutaneous and visceral white adipose tissue. In gonadal fat pad, expressed at lower levels in adipocytes than in the stromal vascular fraction (VSP), which contains preadipocytes, fibroblasts, endothelial cells and occasional immune cells. Expression exhibits sexually dimorphism, with higher levels in females than in males.

Its subcellular location is the secreted. Its function is as follows. May regulate the number of excitatory synapses that are formed on hippocampus neurons. Has no effect on inhibitory synapses. May inhibit adipocyte differentiation at an early stage of the process. In Mus musculus (Mouse), this protein is Complement C1q-like protein 4 (C1ql4).